Here is a 495-residue protein sequence, read N- to C-terminus: ATP synthase subunit beta, chloroplastic (495 aa).

ATP is bound at residue 172–179 (GGAGVGKT).

It belongs to the ATPase alpha/beta chains family. As to quaternary structure, F-type ATPases have 2 components, CF(1) - the catalytic core - and CF(0) - the membrane proton channel. CF(1) has five subunits: alpha(3), beta(3), gamma(1), delta(1), epsilon(1). CF(0) has four main subunits: a(1), b(1), b'(1) and c(9-12).

The protein localises to the plastid. The protein resides in the chloroplast thylakoid membrane. The enzyme catalyses ATP + H2O + 4 H(+)(in) = ADP + phosphate + 5 H(+)(out). Functionally, produces ATP from ADP in the presence of a proton gradient across the membrane. The catalytic sites are hosted primarily by the beta subunits. The chain is ATP synthase subunit beta, chloroplastic from Pteridium aquilinum (Bracken fern).